The chain runs to 81 residues: Dermaseptin-S6 (81 aa).

Residues 1-22 (MDILKKSLFFILFLGLVSLSIS) form the signal peptide. A disordered region spans residues 22–49 (SEEEKRENEDEEDQEDDEQSEEKRGLWS). A propeptide spanning residues 23–45 (EEEKRENEDEEDQEDDEQSEEKR) is cleaved from the precursor. The segment covering 30 to 41 (EDEEDQEDDEQS) has biased composition (acidic residues). Ile78 is modified (isoleucine amide). The propeptide occupies 80–81 (EQ).

This sequence belongs to the frog skin active peptide (FSAP) family. Dermaseptin subfamily. As to expression, expressed by the skin glands.

It localises to the secreted. In terms of biological role, antimicrobial peptide. The sequence is that of Dermaseptin-S6 from Phyllomedusa sauvagei (Sauvage's leaf frog).